The following is a 558-amino-acid chain: Methionine--tRNA ligase 1 (558 aa).

A 'HIGH' region motif is present at residues 10–20 (PYINGIKHLGN). The Zn(2+) site is built by cysteine 142, cysteine 145, cysteine 155, and cysteine 158. The short motif at 332–336 (KFSTS) is the 'KMSKS' region element. An ATP-binding site is contributed by threonine 335.

Belongs to the class-I aminoacyl-tRNA synthetase family. MetG type 1 subfamily. As to quaternary structure, monomer. It depends on Zn(2+) as a cofactor.

Its subcellular location is the cytoplasm. It carries out the reaction tRNA(Met) + L-methionine + ATP = L-methionyl-tRNA(Met) + AMP + diphosphate. Functionally, is required not only for elongation of protein synthesis but also for the initiation of all mRNA translation through initiator tRNA(fMet) aminoacylation. In Acaryochloris marina (strain MBIC 11017), this protein is Methionine--tRNA ligase 1.